The chain runs to 424 residues: Tyrosine--tRNA ligase (424 aa).

L-tyrosine is bound at residue tyrosine 37. The 'HIGH' region motif lies at proline 42–histidine 51. The residue at position 144 (lysine 144) is an N6-acetyllysine. Residues tyrosine 175 and glutamine 179 each contribute to the L-tyrosine site. Positions lysine 235–threonine 239 match the 'KMSKS' region motif. Residue lysine 238 participates in ATP binding. The S4 RNA-binding domain occupies alanine 357 to glycine 414.

Belongs to the class-I aminoacyl-tRNA synthetase family. TyrS type 1 subfamily. As to quaternary structure, homodimer.

The protein localises to the cytoplasm. The enzyme catalyses tRNA(Tyr) + L-tyrosine + ATP = L-tyrosyl-tRNA(Tyr) + AMP + diphosphate + H(+). Functionally, catalyzes the attachment of tyrosine to tRNA(Tyr) in a two-step reaction: tyrosine is first activated by ATP to form Tyr-AMP and then transferred to the acceptor end of tRNA(Tyr). The chain is Tyrosine--tRNA ligase from Shigella flexneri serotype 5b (strain 8401).